Consider the following 62-residue polypeptide: Small acidic protein 1 (62 aa).

As to quaternary structure, interacts with the COP9 signalosome. As to expression, expressed in roots, flowers, siliques, stems, leaves and seeds. In flowers, detected in petals, anthers and pistils.

Functionally, mediates responses to the synthetic auxin 2,4-dichlorophenoxyacetic acid (2,4-D). Not involved in the response to indole-3-acetic acid (IAA). Interacts with RUB modification-related components and may regulate the cullin-ring ubiquitin E3 ligase complex (CRL) activity. The chain is Small acidic protein 1 (SMAP1) from Arabidopsis thaliana (Mouse-ear cress).